The following is a 323-amino-acid chain: Prostaglandin F synthase 1 (323 aa).

NADP(+) is bound by residues 20-24 (GFGTY) and Asp-50. The active-site Proton donor is the Tyr-55. A substrate-binding site is contributed by His-117. NADP(+)-binding positions include 166 to 167 (SN), Gln-190, 216 to 221 (YAALGA), and 270 to 280 (KSFNKKRIKEN).

This sequence belongs to the aldo/keto reductase family. As to quaternary structure, monomer. In terms of processing, the N-terminus is blocked.

The protein resides in the cytoplasm. The catalysed reaction is prostaglandin F2alpha + NADP(+) = prostaglandin D2 + NADPH + H(+). It functions in the pathway lipid metabolism; prostaglandin biosynthesis. Its function is as follows. Catalyzes the reduction of PGD(2) and PGH(2) to PGF(2 alpha) and a stereoisomer, respectively. It has a broad substrate specificity and also reduces other carbonyl compounds. The polypeptide is Prostaglandin F synthase 1 (Bos taurus (Bovine)).